Consider the following 224-residue polypeptide: Glutathione S-transferase D7 (224 aa).

Residues 2 to 83 enclose the GST N-terminal domain; that stretch reads PNLDLYNFPM…YLVEKYGKPD (82 aa). Residues 53 to 55 and 67 to 69 each bind glutathione; these read HTI and ESR. The GST C-terminal domain occupies 90–210; the sequence is DPQKRALINQ…LESLQQGKKF (121 aa).

It belongs to the GST superfamily. Delta family. In terms of assembly, homodimer.

The enzyme catalyses RX + glutathione = an S-substituted glutathione + a halide anion + H(+). Conjugation of reduced glutathione to a wide number of exogenous and endogenous hydrophobic electrophiles. May be involved in detoxification. This chain is Glutathione S-transferase D7, found in Drosophila melanogaster (Fruit fly).